We begin with the raw amino-acid sequence, 176 residues long: Interleukin-7 (176 aa).

Positions 1-25 (MFHVSFRYIFGIPPLILVLLPVASS) are cleaved as a signal peptide. 3 cysteine pairs are disulfide-bonded: Cys-27–Cys-165, Cys-58–Cys-153, and Cys-71–Cys-116. 3 N-linked (GlcNAc...) asparagine glycosylation sites follow: Asn-94, Asn-115, and Asn-140.

It belongs to the IL-7/IL-9 family.

It localises to the secreted. Hematopoietic growth factor capable of stimulating the proliferation of lymphoid progenitors. It is important for proliferation during certain stages of B-cell maturation. This is Interleukin-7 (IL7) from Sus scrofa (Pig).